The chain runs to 431 residues: MKNKINLRSLAAQAIEQVIEQGQSLSNVLPPLQQKVSDKDKALLQELCFGVLRTLSQLEWLINKLMARPMTGKQRTVHFLIMVGLYQLLYTRIPPHAALAETVEGAVAIKRPQLKGLINGVLRQFQRQQEALLVEFAEHENRYLHPKWLLKRLQQAWPQQWQEIVDANNQRPPMWLRVNRNHHSRDEWLALLKEAGLEGFTHPDYPDAVRLATPAPVHALPGFAEGWVTVQDASAQGCMRYLLPENGERILDLCAAPGGKTTHILEVAPQAQVMAVDIDEQRLSRVYDNLKRLGMKAEVKQGDGRFPEQWCGNEQFDRILLDAPCSATGVIRRHPDIKWLRRDRDIAELAQLQAEILNSTWEHLKPGGTLVYATCSILPEENSQQISAFLARTPDAELHATGTPASPGQQNLPGPEEGDGFFYAKLIKRRN.

S-adenosyl-L-methionine-binding positions include 254–260, aspartate 277, aspartate 303, and aspartate 322; that span reads CAAPGGK. Residue cysteine 375 is the Nucleophile of the active site. The interval 398-417 is disordered; that stretch reads LHATGTPASPGQQNLPGPEE. Residues 403–412 show a composition bias toward polar residues; it reads TPASPGQQNL.

Belongs to the class I-like SAM-binding methyltransferase superfamily. RsmB/NOP family.

The protein resides in the cytoplasm. The catalysed reaction is cytidine(967) in 16S rRNA + S-adenosyl-L-methionine = 5-methylcytidine(967) in 16S rRNA + S-adenosyl-L-homocysteine + H(+). Functionally, specifically methylates the cytosine at position 967 (m5C967) of 16S rRNA. This Klebsiella pneumoniae (strain 342) protein is Ribosomal RNA small subunit methyltransferase B.